We begin with the raw amino-acid sequence, 388 residues long: Na(+)/H(+) antiporter NhaA (388 aa).

Over 1–11 (MKHLHRFFSSD) the chain is Cytoplasmic. The chain crosses the membrane as a helical span at residues 12-31 (ASGGIILIIAAILAMIMANS). At 32–58 (GATSGWYHDFLETPVQLRVGSLEINKN) the chain is on the periplasmic side. The interval 45 to 58 (PVQLRVGSLEINKN) is important for dimerization. Residues 59–80 (MLLWINDALMAVFFLLVGLEVK) traverse the membrane as a helical segment. Residues 81–96 (RELMQGSLASLRQAAF) lie on the Cytoplasmic side of the membrane. The chain crosses the membrane as a helical span at residues 97-116 (PVIAAIGGMIVPALLYLAFN). Residues 117-122 (YADPIT) are Periplasmic-facing. The chain crosses the membrane as a helical span at residues 123–130 (REGWAIPA). The Cytoplasmic segment spans residues 131–154 (ATDIAFALGVLALLGSRVPLALKI). A helical membrane pass occupies residues 155 to 176 (FLMALAIIDDLGAIIIIALFYT). Residues 177–180 (NDLS) are Periplasmic-facing. Residues 181–200 (MASLGVAAVAIAVLAVLNLC) form a helical membrane-spanning segment. Residues 201 to 204 (GARR) lie on the Cytoplasmic side of the membrane. A helical transmembrane segment spans residues 205–222 (TGVYILVGVVLWTAVLKS). Residue G223 is a topological domain, periplasmic. A helical membrane pass occupies residues 224–236 (VHATLAGVIVGFF). The Cytoplasmic segment spans residues 237–253 (IPLKEKHGRSPAKRLEH). A helical transmembrane segment spans residues 254–272 (VLHPWVAYLILPLFAFANA). The Periplasmic segment spans residues 273–286 (GVSLQGVTLDGLTS). The helical transmembrane segment at 287–310 (ILPLGIIAGLLIGKPLGISLFCWL) threads the bilayer. Topologically, residues 311–339 (ALRLKLAHLPEGTTYQQIMVVGILCGIGF) are cytoplasmic. Residues 340-350 (TMSIFIASLAF) traverse the membrane as a helical segment. Residues 351 to 357 (GSVDPEL) lie on the Periplasmic side of the membrane. The chain crosses the membrane as a helical span at residues 358 to 380 (INWAKLGILVGSISSAVIGYSWL). Residues 381–388 (RVRLRPSV) lie on the Cytoplasmic side of the membrane.

This sequence belongs to the NhaA Na(+)/H(+) (TC 2.A.33) antiporter family. Monomer. Homodimer. Under routine stress conditions, the monomeric form is fully functional. However, the dimeric form is much more efficient in conferring growth resistance under extreme stress conditions.

The protein resides in the cell inner membrane. It catalyses the reaction Na(+)(in) + 2 H(+)(out) = Na(+)(out) + 2 H(+)(in). It carries out the reaction Li(+)(in) + 2 H(+)(out) = Li(+)(out) + 2 H(+)(in). Its activity is regulated as follows. Activity is regulated by pH. Active at alkaline pH. Activity is strongly down-regulated below pH 6.5 and a dramatic increase in activity is observed upon increase of the pH from 6.5 to 8.5. Functionally, na(+)/H(+) antiporter that extrudes sodium in exchange for external protons. Plays an important role in the regulation of intracellular pH, cellular Na(+) content and cell volume. Catalyzes the exchange of 2 H(+) per Na(+). This stoichiometry applies at both neutral and alkaline pH values. In addition, can also transport lithium and is involved in lithium detoxification. Binding of the Li(+) and H(+) ligands to NhaA is coupled and antagonistic. This chain is Na(+)/H(+) antiporter NhaA, found in Escherichia coli (strain K12).